A 1782-amino-acid chain; its full sequence is AF4/FMR2 family member lilli (1782 aa).

Disordered stretches follow at residues 42–84, 150–313, 434–515, 605–637, 691–732, 768–820, 839–891, 911–1064, 1091–1126, 1166–1234, 1296–1327, 1386–1420, 1450–1484, and 1674–1701; these read NMED…PSEG, ASSS…PPPE, MPTP…QQQQ, GGSS…NLSR, EKLH…QQRY, GALP…LQIP, KVQP…SNKK, VAAA…AAAS, AGNS…QHKQ, LPQS…KQGQ, ARQH…TPKD, LKQE…EQLS, QESA…QQQQ, and GNTP…GKIV. The span at 54 to 80 shows a compositional bias: basic and acidic residues; it reads REKYERQQGIQSDDRETSLFGEPRRLN. Composition is skewed to low complexity over residues 164–180 and 211–260; these read QQQQ…QQQQ and PSSS…MSSP. Residues 435–447 show a composition bias toward pro residues; it reads PTPPKASPTPPAI. Threonine 443 carries the post-translational modification Phosphothreonine. Over residues 450–463 the composition is skewed to basic and acidic residues; it reads MKTEKNHSLEKQDS. Positions 465–475 are enriched in acidic residues; it reads LENDLELSESD. A phosphoserine mark is found at serine 472 and serine 474. 2 stretches are compositionally biased toward low complexity: residues 484 to 515 and 609 to 622; these read SAGN…QQQQ and GSCM…SSSN. Polar residues predominate over residues 623-634; it reads KTPSPTDSNRWN. The span at 691 to 701 shows a compositional bias: basic and acidic residues; it reads EKLHDEPRHVG. Composition is skewed to low complexity over residues 714–730 and 782–805; these read QQQQ…QQQQ and SDSG…GGSS. Over residues 859–869 the composition is skewed to basic residues; sequence PRQKKPRKKKM. 2 positions are modified to phosphoserine: serine 878 and serine 879. The a.T hook DNA-binding region spans 920-932; it reads KKGRGRPRKQAQQ. The segment covering 929-972 has biased composition (low complexity); the sequence is QAQQQQQQQQQQLQQSGNLSSASASSSQAKGPTLTAAKKPLAKA. Phosphoserine occurs at positions 949 and 951. Polar residues predominate over residues 973-982; the sequence is SVSNSNSTAP. Low complexity-rich tracts occupy residues 996-1018, 1033-1064, 1105-1116, and 1174-1196; these read SNSS…TMAA, SSSS…AAAS, SVGSSSNSSSSS, and SSSD…SSSS. Over residues 1308–1318 the composition is skewed to polar residues; the sequence is AQQNGHLSSRS. Over residues 1450–1460 the composition is skewed to polar residues; that stretch reads QESAANGSPNK. Serine 1457 bears the Phosphoserine mark. Low complexity-rich tracts occupy residues 1461-1484 and 1674-1694; these read LQQQ…QQQQ and GNTP…SGSN.

Belongs to the AF4 family.

It localises to the nucleus. Has a role in transcriptional regulation. Acts in parallel with the Ras/MAPK and the PI3K/PKB pathways in the control of cell identity and cellular growth. Essential for regulation of the cytoskeleton and cell growth but not for cell proliferation or growth rate. Required specifically for the microtubule-based basal transport of lipid droplets. Plays a partially redundant function downstream of Raf in cell fate specification in the developing eye. Pair-rule protein that regulates embryonic cellularization, gastrulation and segmentation. This Drosophila mojavensis (Fruit fly) protein is AF4/FMR2 family member lilli.